A 492-amino-acid polypeptide reads, in one-letter code: Catalase isozyme 2 (492 aa).

Catalysis depends on residues H65 and N138. A heme-binding site is contributed by Y348.

The protein belongs to the catalase family. As to quaternary structure, homotetramer. The cofactor is heme.

It localises to the peroxisome. The enzyme catalyses 2 H2O2 = O2 + 2 H2O. Occurs in almost all aerobically respiring organisms and serves to protect cells from the toxic effects of hydrogen peroxide. The chain is Catalase isozyme 2 (CAT2) from Solanum lycopersicum (Tomato).